Here is a 123-residue protein sequence, read N- to C-terminus: MSKSIVFFSTVLVFLFSFSYATPGIATFYTSYTPCYRGTQEGVMIAAASDTLWDNGRVCGKMFTVKCSGPRNAVPHPCTGKSVKVKIVDHCPSGCASTLDLSREAFAQIANPVAGIINIDYFP.

The signal sequence occupies residues 1–21 (MSKSIVFFSTVLVFLFSFSYA). Residues 24-123 (GIATFYTSYT…AGIINIDYFP (100 aa)) form the Expansin-like EG45 domain.

The protein localises to the secreted. In terms of biological role, might have a systemic role in water and solute homeostasis. The polypeptide is Putative EG45-like domain containing protein 1 (EGC1) (Arabidopsis thaliana (Mouse-ear cress)).